Reading from the N-terminus, the 509-residue chain is Seipin-3 (509 aa).

The segment at 33 to 73 (YDCLNSSPPANLRRRRLPMDTDSSSSSSTSSLESCEKRSTV) is disordered. Low complexity predominate over residues 52-63 (DTDSSSSSSTSS). The next 2 membrane-spanning stretches (helical) occupy residues 238–258 (LFCA…AFMI) and 455–475 (LFVW…LVFF).

The protein belongs to the seipin family. As to expression, expressed in seeds, seedlings, leaves, stems and roots. Not detected in flowers.

Its subcellular location is the endoplasmic reticulum membrane. In terms of biological role, involved in lipid metabolism and lipid droplet (LD) morphology, number, and size. Supports the formation of small-sized LDs and modulates triacylglycerol accumulation. Induces probably a reorganization of the endoplasmic reticulum into LD-forming domains. This Arabidopsis thaliana (Mouse-ear cress) protein is Seipin-3.